A 464-amino-acid chain; its full sequence is Soluble pyridine nucleotide transhydrogenase (464 aa).

35-44 (DSRRQVGGNC) provides a ligand contact to FAD.

Belongs to the class-I pyridine nucleotide-disulfide oxidoreductase family. FAD is required as a cofactor.

It is found in the cytoplasm. The catalysed reaction is NAD(+) + NADPH = NADH + NADP(+). In terms of biological role, conversion of NADPH, generated by peripheral catabolic pathways, to NADH, which can enter the respiratory chain for energy generation. In Pseudomonas fluorescens (strain ATCC BAA-477 / NRRL B-23932 / Pf-5), this protein is Soluble pyridine nucleotide transhydrogenase.